A 290-amino-acid polypeptide reads, in one-letter code: Diaminopimelate epimerase (290 aa).

Substrate is bound by residues asparagine 17, glutamine 49, and asparagine 69. Cysteine 78 serves as the catalytic Proton donor. Substrate-binding positions include 79–80 (GN), asparagine 165, asparagine 198, and 216–217 (ER). The Proton acceptor role is filled by cysteine 225. 226-227 (GS) serves as a coordination point for substrate.

Belongs to the diaminopimelate epimerase family. In terms of assembly, homodimer.

It is found in the cytoplasm. It carries out the reaction (2S,6S)-2,6-diaminopimelate = meso-2,6-diaminopimelate. It functions in the pathway amino-acid biosynthesis; L-lysine biosynthesis via DAP pathway; DL-2,6-diaminopimelate from LL-2,6-diaminopimelate: step 1/1. Its function is as follows. Catalyzes the stereoinversion of LL-2,6-diaminopimelate (L,L-DAP) to meso-diaminopimelate (meso-DAP), a precursor of L-lysine and an essential component of the bacterial peptidoglycan. This is Diaminopimelate epimerase from Methylocella silvestris (strain DSM 15510 / CIP 108128 / LMG 27833 / NCIMB 13906 / BL2).